Consider the following 203-residue polypeptide: Leucyl/phenylalanyl-tRNA--protein transferase (203 aa).

Belongs to the L/F-transferase family.

The protein localises to the cytoplasm. It catalyses the reaction N-terminal L-lysyl-[protein] + L-leucyl-tRNA(Leu) = N-terminal L-leucyl-L-lysyl-[protein] + tRNA(Leu) + H(+). It carries out the reaction N-terminal L-arginyl-[protein] + L-leucyl-tRNA(Leu) = N-terminal L-leucyl-L-arginyl-[protein] + tRNA(Leu) + H(+). The catalysed reaction is L-phenylalanyl-tRNA(Phe) + an N-terminal L-alpha-aminoacyl-[protein] = an N-terminal L-phenylalanyl-L-alpha-aminoacyl-[protein] + tRNA(Phe). In terms of biological role, functions in the N-end rule pathway of protein degradation where it conjugates Leu, Phe and, less efficiently, Met from aminoacyl-tRNAs to the N-termini of proteins containing an N-terminal arginine or lysine. The polypeptide is Leucyl/phenylalanyl-tRNA--protein transferase (Chelativorans sp. (strain BNC1)).